A 46-amino-acid polypeptide reads, in one-letter code: Iota-conotoxin RXIA (46 aa).

A 4-hydroxyproline; partial mark is found at proline 2 and proline 11. Cystine bridges form between cysteine 5/cysteine 19, cysteine 12/cysteine 22, cysteine 18/cysteine 27, and cysteine 21/cysteine 38. Proline 29 carries the post-translational modification 4-hydroxyproline. The residue at position 44 (phenylalanine 44) is a D-phenylalanine.

The protein belongs to the conotoxin I1 superfamily. Post-translationally, the natural D-Phe-44 form of the peptide is more potent than the L-Phe-44 form. As to expression, expressed by the venom duct.

It localises to the secreted. Its function is as follows. Iota-conotoxins bind to voltage-gated sodium channels and act as agonists by shifting the voltage-dependence of activation to more hyperpolarized levels. This toxin acts on Nav1.6/SCN8A &gt; Nav1.2/SCN2A &gt; Nav1.7/SCN9A sodium channels. Produces general excitatory symptoms upon intracorporeal injection and repetitive action potentials in the frog cutaneous pectoris muscle. Natural peptide (with D-Phe) is active on nerve, but not on muscle. Synthetic peptide (with L-Phe) is not active on both nerve and muscle. The polypeptide is Iota-conotoxin RXIA (Conus radiatus (Rayed cone)).